We begin with the raw amino-acid sequence, 921 residues long: Isoleucine--tRNA ligase (921 aa).

A 'HIGH' region motif is present at residues 57 to 67; it reads PYANGDIHMGH. E552 is an L-isoleucyl-5'-AMP binding site. Residues 593–597 carry the 'KMSKS' region motif; that stretch reads KMSKS. An ATP-binding site is contributed by K596. Residues C888, C891, C908, and C911 each contribute to the Zn(2+) site.

This sequence belongs to the class-I aminoacyl-tRNA synthetase family. IleS type 1 subfamily. In terms of assembly, monomer. Zn(2+) serves as cofactor.

The protein localises to the cytoplasm. It catalyses the reaction tRNA(Ile) + L-isoleucine + ATP = L-isoleucyl-tRNA(Ile) + AMP + diphosphate. In terms of biological role, catalyzes the attachment of isoleucine to tRNA(Ile). As IleRS can inadvertently accommodate and process structurally similar amino acids such as valine, to avoid such errors it has two additional distinct tRNA(Ile)-dependent editing activities. One activity is designated as 'pretransfer' editing and involves the hydrolysis of activated Val-AMP. The other activity is designated 'posttransfer' editing and involves deacylation of mischarged Val-tRNA(Ile). The polypeptide is Isoleucine--tRNA ligase (Bacillus mycoides (strain KBAB4) (Bacillus weihenstephanensis)).